Consider the following 142-residue polypeptide: Large ribosomal subunit protein uL11 (142 aa).

This sequence belongs to the universal ribosomal protein uL11 family. In terms of assembly, part of the ribosomal stalk of the 50S ribosomal subunit. Interacts with L10 and the large rRNA to form the base of the stalk. L10 forms an elongated spine to which L12 dimers bind in a sequential fashion forming a multimeric L10(L12)X complex. Post-translationally, one or more lysine residues are methylated.

In terms of biological role, forms part of the ribosomal stalk which helps the ribosome interact with GTP-bound translation factors. This Ruthia magnifica subsp. Calyptogena magnifica protein is Large ribosomal subunit protein uL11.